A 347-amino-acid polypeptide reads, in one-letter code: Endothelin receptor type B (347 aa).

Over 1-7 the chain is Extracellular; sequence EIKETFK. The chain crosses the membrane as a helical span at residues 8–32; that stretch reads YINTVVSCLVFVLGIIGNSTLLRII. Over 33 to 43 the chain is Cytoplasmic; it reads YKNKCMRNGPN. Residues 44–69 form a helical membrane-spanning segment; sequence ILIASLALGDLLHIIIDIPISVYKLL. Over 70 to 81 the chain is Extracellular; the sequence is AEDWPFGVEMCK. Cys80 and Cys161 form a disulfide bridge. The helical transmembrane segment at 82-103 threads the bilayer; it reads LVPFIQKASVGITVLSLCALSI. Residues 104 to 124 lie on the Cytoplasmic side of the membrane; the sequence is DRYRAVASWSRIKGIGVPKWT. The helical transmembrane segment at 125-149 threads the bilayer; that stretch reads AVEIVLIWVISVVLAVPEAIAFDMI. Over 150-177 the chain is Extracellular; the sequence is TMEYRGKDLRICLLHPTQKTSFMMFYKQ. Residues 178 to 202 traverse the membrane as a helical segment; it reads AKDWWLFSFYFCLPLAITALFYTLM. The Cytoplasmic segment spans residues 203–230; it reads TCEMLRKKSGMQIALNDHLKQRREVAKT. The helical transmembrane segment at 231-256 threads the bilayer; the sequence is VFCLVLVFALCWLPLHLSRILKLTIY. Residues 257–268 are Extracellular-facing; the sequence is DQKDPNRCELLS. A helical membrane pass occupies residues 269-295; it reads FFLVMDYIGINMASLNSCINPIALYLV. The Cytoplasmic segment spans residues 296-347; the sequence is SKRFQNCFKSCLCCWCQSKDLLSLEERQSCLKFKANDHGYDNFRSSNKYSSS. 2 S-palmitoyl cysteine lipidation sites follow: Cys309 and Cys311.

Belongs to the G-protein coupled receptor 1 family. Endothelin receptor subfamily. EDNRB sub-subfamily.

It is found in the cell membrane. Functionally, non-specific receptor for endothelin 1, 2, and 3. Mediates its action by association with G proteins that activate a phosphatidylinositol-calcium second messenger system. The protein is Endothelin receptor type B (EDNRB) of Coturnix japonica (Japanese quail).